The chain runs to 507 residues: Maturase K (507 aa).

The protein belongs to the intron maturase 2 family. MatK subfamily.

The protein resides in the plastid. It is found in the chloroplast. Its function is as follows. Usually encoded in the trnK tRNA gene intron. Probably assists in splicing its own and other chloroplast group II introns. The sequence is that of Maturase K from Buxus microphylla (Littleleaf boxwood).